We begin with the raw amino-acid sequence, 597 residues long: Electron transfer flavoprotein-ubiquinone oxidoreductase, mitochondrial (597 aa).

53–67 contacts FAD; sequence VVIVGGGPSGLSAAI. An intramembrane segment occupies 91–112; that stretch reads IGGHTLSGAVIETRALDELIPN. Positions 285 and 286 each coordinate a ubiquinone. An intramembrane segment occupies 409-426; the sequence is IDPATYDKNIRDTYVVKE. Residues cysteine 540, cysteine 566, cysteine 569, and cysteine 572 each contribute to the [4Fe-4S] cluster site. The 30-residue stretch at 557-586 folds into the 4Fe-4S ferredoxin-type domain; it reads KRLQINAQNCIHCKTCDIKDPQQNINWVTP.

Belongs to the ETF-QO/FixC family. In terms of assembly, monomer. [4Fe-4S] cluster serves as cofactor. FAD is required as a cofactor.

It localises to the mitochondrion inner membrane. It catalyses the reaction a ubiquinone + reduced [electron-transfer flavoprotein] = a ubiquinol + oxidized [electron-transfer flavoprotein] + H(+). Accepts electrons from ETF and reduces ubiquinone. The protein is Electron transfer flavoprotein-ubiquinone oxidoreductase, mitochondrial (let-721) of Caenorhabditis elegans.